Reading from the N-terminus, the 322-residue chain is RNA pseudouridine synthase 1 (322 aa).

D120 is an active-site residue.

It belongs to the pseudouridine synthase RluA family.

It carries out the reaction a uridine in RNA = a pseudouridine in RNA. This chain is RNA pseudouridine synthase 1, found in Arabidopsis thaliana (Mouse-ear cress).